The primary structure comprises 339 residues: Phenylalanine--tRNA ligase alpha subunit (339 aa).

Residue E253 participates in Mg(2+) binding.

It belongs to the class-II aminoacyl-tRNA synthetase family. Phe-tRNA synthetase alpha subunit type 1 subfamily. Tetramer of two alpha and two beta subunits. Mg(2+) is required as a cofactor.

The protein resides in the cytoplasm. It catalyses the reaction tRNA(Phe) + L-phenylalanine + ATP = L-phenylalanyl-tRNA(Phe) + AMP + diphosphate + H(+). The protein is Phenylalanine--tRNA ligase alpha subunit of Ruthia magnifica subsp. Calyptogena magnifica.